Reading from the N-terminus, the 161-residue chain is Putative TRAP transporter small permease protein HI_1030 (161 aa).

The next 4 membrane-spanning stretches (helical) occupy residues 13 to 33 (LEIL…LNVV), 51 to 71 (YLFI…NQHV), 86 to 106 (AILK…IIEG), and 135 to 155 (IAGI…IFFI).

It belongs to the TRAP transporter small permease family.

Its subcellular location is the cell inner membrane. In Haemophilus influenzae (strain ATCC 51907 / DSM 11121 / KW20 / Rd), this protein is Putative TRAP transporter small permease protein HI_1030.